The chain runs to 355 residues: MHNFAKIFRSNFIDINAANKFEIFLKTILRIYKTPARTHLLAHAADISAIYAVRQIYNYMKNDEEGRTVLKEKPLLIRQDIQFNELKKLPKNTLGYKYMKFLETYKLHAHDREVSHFFTDLNYSYILTRYRQIHDIGHVVYNLNISIESEAALKLIELVQTKLPITLLAILVAPFMTPIYRFQYIFKDSLPSNFLSPNFDFTYTDAYNYVDELSIKQYEYNLTDYFHVEKRNDRNFYTKMYQHYFDNINNSSAVRGSIIYGFENKSSNDIIYDQPNREYIFLKNLKKKYLLFQYKPRKNLLRELYPWAYMAGVSTTKPLHSIHIEKWLDKDIDLFRRTYNISPLPDHLNLMAGIN.

4 residues coordinate Zn(2+): His-134, Asp-135, His-138, and Glu-150.

This sequence belongs to the COQ4 family. As to quaternary structure, component of a multi-subunit COQ enzyme complex. The cofactor is Zn(2+).

The protein resides in the mitochondrion inner membrane. The catalysed reaction is a 4-hydroxy-3-methoxy-5-(all-trans-polyprenyl)benzoate + H(+) = a 2-methoxy-6-(all-trans-polyprenyl)phenol + CO2. It functions in the pathway cofactor biosynthesis; ubiquinone biosynthesis. Its function is as follows. Lyase that catalyzes the C1-decarboxylation of 4-hydroxy-3-methoxy-5-(all-trans-polyprenyl)benzoic acid into 2-methoxy-6-(all-trans-polyprenyl)phenol during ubiquinone biosynthesis. The polypeptide is Ubiquinone biosynthesis protein COQ4 homolog, mitochondrial (Plasmodium vivax (strain Salvador I)).